The following is a 368-amino-acid chain: MKKSELDVNQYLIRTDLAVETKEAMANQQAVPTKEIKGFIEKERDHGGIKIRTVDVTKEGAELSGKKEGRYLTLEAQGIRENDSEMQEKVSAVFAEEFSAFLENLNISKDASCLIVGLGNWNVTPDALGPMAVENLLVTRHLFKLQPENVQEGYRPVSAFAPGVMGITGIETSDIIKGVIEQSKPDFVIAIDALAARAVERVNTTIQISDTGIHPGSGVGNKRKDLSKDTLGVPVIAIGVPTVVDAVTIASDTVDYILKHFGREMKDNRPSRSLVPAGMTFGKKKVLTEDDLPDQKQRQSFLGIVGTLQEDEKRQLIHEVLSPLGHNLMVTPKEVDSFIDDMANVLANGLNTALHEKVSQENKGSYNH.

Positions M1 to D16 are excised as a propeptide.

The protein belongs to the peptidase A25 family. In terms of assembly, homotetramer. In terms of processing, autoproteolytically processed. The inactive tetrameric zymogen termed p46 autoprocesses to a smaller form termed p41, which is active only during spore germination.

It carries out the reaction Endopeptidase action with P4 Glu or Asp, P1 preferably Glu &gt; Asp, P1' hydrophobic and P2' Ala.. Initiates the degradation of small, acid-soluble proteins during spore germination. The protein is Germination protease (gpr) of Bacillus subtilis (strain 168).